A 296-amino-acid polypeptide reads, in one-letter code: MKNPSLRQKLEAYYRLTRLDKPIGILLLLWPTLWGIWLASPGWPDGLVLFVFIAGTVLMRSAGCVMNDLADRNFDGHVERTRQRPLVTGDVTTKEAVLLALALSLVAFILVLQLNPLVVALSFPALFLAASYPLTKRFLSIPQAYLGIAFGFGIPMAFAAITGQLPLEAWILLLANVFWAIAYDTEYAMVDRNDDLNIGIRSSAIFFGRLDVFAVMACYGAFLILMAWVGVRLQQSWPYFAGLGVAALVALYHYALIRDRDRQSCFKAFLHNNWLGAAIFVGVLASDYFRSSILSI.

Transmembrane regions (helical) follow at residues 23–43 (IGILLLLWPTLWGIWLASPGW), 46–66 (GLVLFVFIAGTVLMRSAGCVM), 99–119 (LALALSLVAFILVLQLNPLVV), 141–161 (IPQAYLGIAFGFGIPMAFAAI), 163–183 (GQLPLEAWILLLANVFWAIAY), 211–231 (DVFAVMACYGAFLILMAWVGV), 237–257 (WPYFAGLGVAALVALYHYALI), and 265–285 (CFKAFLHNNWLGAAIFVGVLA).

The protein belongs to the UbiA prenyltransferase family. Mg(2+) serves as cofactor.

The protein localises to the cell inner membrane. It carries out the reaction all-trans-octaprenyl diphosphate + 4-hydroxybenzoate = 4-hydroxy-3-(all-trans-octaprenyl)benzoate + diphosphate. The protein operates within cofactor biosynthesis; ubiquinone biosynthesis. Catalyzes the prenylation of para-hydroxybenzoate (PHB) with an all-trans polyprenyl group. Mediates the second step in the final reaction sequence of ubiquinone-8 (UQ-8) biosynthesis, which is the condensation of the polyisoprenoid side chain with PHB, generating the first membrane-bound Q intermediate 3-octaprenyl-4-hydroxybenzoate. This is 4-hydroxybenzoate octaprenyltransferase from Methylobacillus flagellatus (strain ATCC 51484 / DSM 6875 / VKM B-1610 / KT).